A 230-amino-acid polypeptide reads, in one-letter code: Androgen-dependent TFPI-regulating protein (230 aa).

Topologically, residues 1 to 3 (MTK) are cytoplasmic. Residues 4 to 24 (TSTCIYHFLVLSWYTFLNYYI) traverse the membrane as a helical segment. Residues 25 to 46 (SQEGKDEVKPKILANGARWKYM) lie on the Extracellular side of the membrane. A helical membrane pass occupies residues 47–67 (TLLNLLLQTIFYGVTCLDDVL). The Cytoplasmic portion of the chain corresponds to 68–85 (KRTKGGKDIKFLTAFRDL). Residues 86–106 (LFTTLAFPVSTFVFLAFWILF) traverse the membrane as a helical segment. Over 107 to 119 (LYNRDLIYPKVLD) the chain is Extracellular. The helical transmembrane segment at 120-140 (TVIPVWLNHAMHTFIFPITLA) threads the bilayer. At 141 to 154 (EVVLRPHSYPSKKT) the chain is on the cytoplasmic side. A helical membrane pass occupies residues 155–175 (GLTLLAAASIAYISRILWLYF). The Extracellular portion of the chain corresponds to 176 to 189 (ETGTWVYPVFAKLS). Residues 190 to 210 (LLGLAAFFSLSYVFIASIYLL) form a helical membrane-spanning segment. At 211–230 (GEKLNHWKWGDMRQPRKKRK) the chain is on the cytoplasmic side.

Belongs to the AIG1 family. As to expression, expressed in cultured endothelial cells and in placenta.

The protein localises to the cell membrane. It catalyses the reaction 9-hexadecanoyloxy-octadecanoate + H2O = 9-hydroxy-octadecanoate + hexadecanoate + H(+). It carries out the reaction 12-hexadecanoyloxy-octadecanoate + H2O = 12-hydroxyoctadecanoate + hexadecanoate + H(+). The enzyme catalyses 9-(9Z-hexadecenoyloxy)-octadecanoate + H2O = (9Z)-hexadecenoate + 9-hydroxy-octadecanoate + H(+). The catalysed reaction is 12-(9Z-hexadecenoyloxy)-octadecanoate + H2O = 12-hydroxyoctadecanoate + (9Z)-hexadecenoate + H(+). It catalyses the reaction 13-(9Z-hexadecenoyloxy)-octadecanoate + H2O = 13-hydroxy-octadecanoate + (9Z)-hexadecenoate + H(+). It carries out the reaction 9-octadecanoyloxy-octadecanoate + H2O = 9-hydroxy-octadecanoate + octadecanoate + H(+). The enzyme catalyses 12-octadecanoyloxy-octadecanoate + H2O = 12-hydroxyoctadecanoate + octadecanoate + H(+). The catalysed reaction is 13-octadecanoyloxy-octadecanoate + H2O = 13-hydroxy-octadecanoate + octadecanoate + H(+). It catalyses the reaction 9-(9Z-octadecenoyloxy)-octadecanoate + H2O = 9-hydroxy-octadecanoate + (9Z)-octadecenoate + H(+). It carries out the reaction 12-(9Z-octadecenoyloxy)-octadecanoate + H2O = 12-hydroxyoctadecanoate + (9Z)-octadecenoate + H(+). The enzyme catalyses 13-(9Z-octadecenoyloxy)-octadecanoate + H2O = 13-hydroxy-octadecanoate + (9Z)-octadecenoate + H(+). The catalysed reaction is 5-(9Z-octadecenoyloxy)-octadecanoate + H2O = 5-hydroxy-octadecanoate + (9Z)-octadecenoate + H(+). Its activity is regulated as follows. Inhibited by N-hydroxyhydantoin carbamate JJH260 and beta-lactone KC01. Hydrolyzes bioactive fatty-acid esters of hydroxy-fatty acids (FAHFAs), but not other major classes of lipids. Show a preference for FAHFAs with branching distal from the carboxylate head group of the lipids. Regulates the expression and the cell-associated anticoagulant activity of the inhibitor TFPI in endothelial cells (in vitro). This chain is Androgen-dependent TFPI-regulating protein (ADTRP), found in Homo sapiens (Human).